Consider the following 347-residue polypeptide: Phenylalanine--tRNA ligase alpha subunit (347 aa).

Mg(2+) is bound at residue E265.

This sequence belongs to the class-II aminoacyl-tRNA synthetase family. Phe-tRNA synthetase alpha subunit type 1 subfamily. In terms of assembly, tetramer of two alpha and two beta subunits. It depends on Mg(2+) as a cofactor.

Its subcellular location is the cytoplasm. It carries out the reaction tRNA(Phe) + L-phenylalanine + ATP = L-phenylalanyl-tRNA(Phe) + AMP + diphosphate + H(+). The protein is Phenylalanine--tRNA ligase alpha subunit of Wolbachia pipientis subsp. Culex pipiens (strain wPip).